The chain runs to 185 residues: Large ribosomal subunit protein uL22 (185 aa).

The disordered stretch occupies residues 157-185 (VAAPTPDEDAPKKKQSKKKMARQKLMQRD). The segment covering 169–178 (KKQSKKKMAR) has biased composition (basic residues).

This sequence belongs to the universal ribosomal protein uL22 family.

The sequence is that of Large ribosomal subunit protein uL22 (RpL17) from Argas monolakensis (Mono lake bird tick).